The sequence spans 259 residues: Major prion protein (259 aa).

An N-terminal signal peptide occupies residues 1 to 24 (MGKIQLGYWILVLFIVTWSDLGLC). The interaction with GRB2, ERI3 and SYN1 stretch occupies residues 25 to 235 (KKPKPRPGGG…EYEAAAQRAY (211 aa)). Residues 29-110 (PRPGGGWNSG…GYNKWKPDKP (82 aa)) form a disordered region. Gly-63, Gly-64, His-72, Gly-74, His-82, Gly-84, His-92, and Gly-94 together coordinate Cu(2+). Gly residues predominate over residues 91 to 101 (PHGGSNWGQGG). Cys-184 and Cys-219 form a disulfide bridge. N-linked (GlcNAc...) asparagine glycosylation is found at Asn-186 and Asn-202. Residue Asn-236 is the site of GPI-anchor amidated asparagine attachment. A propeptide spans 237–259 (MAFFSAPPVTLLFLSFLIFLIVS) (removed in mature form).

Belongs to the prion family. Monomer and homodimer. Has a tendency to aggregate into amyloid fibrils containing a cross-beta spine, formed by a steric zipper of superposed beta-strands. Soluble oligomers may represent an intermediate stage on the path to fibril formation. Copper binding may promote oligomerization. Interacts with GRB2, APP, ERI3/PRNPIP and SYN1. Mislocalized cytosolically exposed PrP interacts with MGRN1; this interaction alters MGRN1 subcellular location and causes lysosomal enlargement. Interacts with KIAA1191.

It is found in the cell membrane. Its subcellular location is the golgi apparatus. Its primary physiological function is unclear. Has cytoprotective activity against internal or environmental stresses. May play a role in neuronal development and synaptic plasticity. May be required for neuronal myelin sheath maintenance. May play a role in iron uptake and iron homeostasis. Soluble oligomers are toxic to cultured neuroblastoma cells and induce apoptosis (in vitro). Association with GPC1 (via its heparan sulfate chains) targets PRNP to lipid rafts. Also provides Cu(2+) or Zn(2+) for the ascorbate-mediated GPC1 deaminase degradation of its heparan sulfate side chains. The polypeptide is Major prion protein (PRNP) (Trichosurus vulpecula (Brush-tailed possum)).